The chain runs to 189 residues: Nuclear distribution protein nudE homolog 1 (189 aa).

Residues 4 to 121 (NLDLETAIQI…LRVSKEEATS (118 aa)) are a coiled coil. Positions 114-126 (VSKEEATSGETRR) are enriched in basic and acidic residues. Residues 114–139 (VSKEEATSGETRRNTRSLPSQNKKMK) are disordered.

It belongs to the nudE family. Self-associates. Interacts with PAC1.

It localises to the nucleus. The protein localises to the cytoplasm. The protein resides in the cytoskeleton. Functionally, required for nuclear migration to the bud neck during cell division. Targets cytoplasmic dynein to microtubule plus ends thereby promoting dynein-mediated microtubule sliding along the bud cortex and consequently the movement of the mitotic spindle to the bud neck. This Saccharomyces cerevisiae (strain ATCC 204508 / S288c) (Baker's yeast) protein is Nuclear distribution protein nudE homolog 1 (NDL1).